The primary structure comprises 145 residues: MIGLIQRVSEASVCVGNEVIGEINQGILLLLGVEKNDNEEKAKKLFQRVLNYRIFSDQDSKMNLNLQQVGGGLLVVSQFTLVAQTNKGNRPGFSQGASPELGKTLYNYFVELGRSSEILCESGKFGADMQVRLINDGPVTFSLNV.

A Gly-cisPro motif, important for rejection of L-amino acids motif is present at residues G137–P138.

Belongs to the DTD family. As to quaternary structure, homodimer.

The protein resides in the cytoplasm. It carries out the reaction glycyl-tRNA(Ala) + H2O = tRNA(Ala) + glycine + H(+). It catalyses the reaction a D-aminoacyl-tRNA + H2O = a tRNA + a D-alpha-amino acid + H(+). Functionally, an aminoacyl-tRNA editing enzyme that deacylates mischarged D-aminoacyl-tRNAs. Also deacylates mischarged glycyl-tRNA(Ala), protecting cells against glycine mischarging by AlaRS. Acts via tRNA-based rather than protein-based catalysis; rejects L-amino acids rather than detecting D-amino acids in the active site. By recycling D-aminoacyl-tRNA to D-amino acids and free tRNA molecules, this enzyme counteracts the toxicity associated with the formation of D-aminoacyl-tRNA entities in vivo and helps enforce protein L-homochirality. This chain is D-aminoacyl-tRNA deacylase, found in Pseudoalteromonas atlantica (strain T6c / ATCC BAA-1087).